Here is a 259-residue protein sequence, read N- to C-terminus: Peptide methionine sulfoxide reductase (259 aa).

The tract at residues 66 to 90 is disordered; sequence TRTPADASMDQSSIAQGPDDDIPAP.

It belongs to the MsrA Met sulfoxide reductase family.

The enzyme catalyses L-methionyl-[protein] + [thioredoxin]-disulfide + H2O = L-methionyl-(S)-S-oxide-[protein] + [thioredoxin]-dithiol. The catalysed reaction is [thioredoxin]-disulfide + L-methionine + H2O = L-methionine (S)-S-oxide + [thioredoxin]-dithiol. Its function is as follows. Has an important function as a repair enzyme for proteins that have been inactivated by oxidation. Catalyzes the reversible oxidation-reduction of methionine sulfoxide in proteins to methionine. This Lactuca sativa (Garden lettuce) protein is Peptide methionine sulfoxide reductase.